The following is a 277-amino-acid chain: Sulfate transport system permease protein CysT (277 aa).

The next 7 helical transmembrane spans lie at 17–37 (LGTS…ALVM), 64–84 (LLSA…MAWI), 99–119 (LMDL…ASLF), 136–156 (VTYT…PFVV), 185–205 (FCKV…ALSF), 215–235 (VIFI…MIFV), and 243–263 (PAAS…LFSI). Residues 60 to 263 (YKVTLLSAFV…AASLLLLFSI (204 aa)) enclose the ABC transmembrane type-1 domain.

Belongs to the binding-protein-dependent transport system permease family. CysTW subfamily. In terms of assembly, the complex is composed of two ATP-binding proteins (CysA), two transmembrane proteins (CysT and CysW) and a solute-binding protein (CysP).

It is found in the cell inner membrane. Functionally, part of the ABC transporter complex CysAWTP (TC 3.A.1.6.1) involved in sulfate/thiosulfate import. Probably responsible for the translocation of the substrate across the membrane. The polypeptide is Sulfate transport system permease protein CysT (cysU) (Escherichia coli (strain K12)).